Reading from the N-terminus, the 207-residue chain is Small ribosomal subunit protein uS3 (207 aa).

Residues Ile17–Lys86 form the KH type-2 domain.

It belongs to the universal ribosomal protein uS3 family. Part of the 30S ribosomal subunit.

Binds the lower part of the 30S subunit head. This Thermococcus sibiricus (strain DSM 12597 / MM 739) protein is Small ribosomal subunit protein uS3.